The following is a 424-amino-acid chain: 3-ketoacyl-CoA thiolase A, peroxisomal (424 aa).

Residues 1–26 (MHRLQVVLGHLAGRPESSSALQAAPC) constitute a peroxisome transit peptide. Positions 1–26 (MHRLQVVLGHLAGRPESSSALQAAPC) are PTS2-type peroxisomal targeting signal. Residue Cys-123 is the Acyl-thioester intermediate of the active site. N6-acetyllysine occurs at positions 173 and 234. Residues His-377 and Cys-408 each act as proton acceptor in the active site.

It belongs to the thiolase-like superfamily. Thiolase family. In terms of assembly, homodimer. Interacts (via PTS2-type peroxisomal targeting signal region) with PEX7; leading to its translocation into peroxisomes. Mainly expressed in liver and intestine.

Its subcellular location is the peroxisome. The enzyme catalyses an acyl-CoA + acetyl-CoA = a 3-oxoacyl-CoA + CoA. The catalysed reaction is 2 acetyl-CoA = acetoacetyl-CoA + CoA. It catalyses the reaction tetradecanoyl-CoA + acetyl-CoA = 3-oxohexadecanoyl-CoA + CoA. It carries out the reaction hexanoyl-CoA + acetyl-CoA = 3-oxooctanoyl-CoA + CoA. The enzyme catalyses 3-oxohexadecanedioyl-CoA + CoA = tetradecanedioyl-CoA + acetyl-CoA. The catalysed reaction is 3-oxo-(6Z,9Z,12Z,15Z,18Z,21Z)-tetracosahexaenoyl-CoA + CoA = (4Z,7Z,10Z,13Z,16Z,19Z)-docosahexaenoyl-CoA + acetyl-CoA. It participates in lipid metabolism; peroxisomal fatty acid beta-oxidation. Functionally, responsible for the thiolytic cleavage of straight chain 3-keto fatty acyl-CoAs (3-oxoacyl-CoAs). Plays an important role in fatty acid peroxisomal beta-oxidation. Catalyzes the cleavage of short, medium, long, and very long straight chain 3-oxoacyl-CoAs. The chain is 3-ketoacyl-CoA thiolase A, peroxisomal from Mus musculus (Mouse).